Here is a 371-residue protein sequence, read N- to C-terminus: Cell division control protein 3 (371 aa).

The 286-residue stretch at 22-307 folds into the Septin-type G domain; sequence AGIDFNIMTV…DEYKTREIGL (286 aa). The tract at residues 32 to 39 is G1 motif; it reads GSNGLGKS. GTP contacts are provided by residues 32–39, G116, 195–203, and R257; these read GSNGLGKS and KSDLLSDSE. The segment at 113–116 is G3 motif; it reads EVDG. The segment at 194 to 197 is G4 motif; it reads GKSD.

This sequence belongs to the TRAFAC class TrmE-Era-EngA-EngB-Septin-like GTPase superfamily. Septin GTPase family. In terms of assembly, component of the septin complex.

Functionally, septins are GTPases involved in cytokinesis. The septins localize to the site of cleavage and act as a structural scaffold that recruits different components involved in diverse processes at specific stages during the cell cycle. Septins are also involved in cell morphogenesis, chitin deposition, cell cycle regulation, cell compartmentalization and spore wall formation. The protein is Cell division control protein 3 (CDC3) of Encephalitozoon cuniculi (strain GB-M1) (Microsporidian parasite).